Reading from the N-terminus, the 702-residue chain is Methionine--tRNA ligase (702 aa).

The short motif at 14-24 (PYANGPVHLGH) is the 'HIGH' region element. Zn(2+) is bound by residues Cys-146, Cys-149, Cys-159, and Cys-162. A 'KMSKS' region motif is present at residues 344 to 348 (KFSKS). Lys-347 is an ATP binding site. In terms of domain architecture, tRNA-binding spans 601–702 (DFQKVDLRAA…GEKINGSSVQ (102 aa)).

This sequence belongs to the class-I aminoacyl-tRNA synthetase family. MetG type 1 subfamily. In terms of assembly, homodimer. Zn(2+) is required as a cofactor.

The protein resides in the cytoplasm. It carries out the reaction tRNA(Met) + L-methionine + ATP = L-methionyl-tRNA(Met) + AMP + diphosphate. In terms of biological role, is required not only for elongation of protein synthesis but also for the initiation of all mRNA translation through initiator tRNA(fMet) aminoacylation. This is Methionine--tRNA ligase from Chlorobium phaeovibrioides (strain DSM 265 / 1930) (Prosthecochloris vibrioformis (strain DSM 265)).